Reading from the N-terminus, the 308-residue chain is Mycothiol acetyltransferase (308 aa).

N-acetyltransferase domains follow at residues 16-152 (ETLA…RPLA) and 165-308 (VTVR…RTES). Glutamate 47 serves as a coordination point for 1D-myo-inositol 2-(L-cysteinylamino)-2-deoxy-alpha-D-glucopyranoside. 91 to 93 (LVV) contacts acetyl-CoA. The 1D-myo-inositol 2-(L-cysteinylamino)-2-deoxy-alpha-D-glucopyranoside site is built by glutamate 192, lysine 231, and glutamate 240. Residues 244 to 246 (LGV) and 251 to 257 (QGGGLGK) contribute to the acetyl-CoA site. Residue tyrosine 278 coordinates 1D-myo-inositol 2-(L-cysteinylamino)-2-deoxy-alpha-D-glucopyranoside.

This sequence belongs to the acetyltransferase family. MshD subfamily. As to quaternary structure, monomer.

The enzyme catalyses 1D-myo-inositol 2-(L-cysteinylamino)-2-deoxy-alpha-D-glucopyranoside + acetyl-CoA = mycothiol + CoA + H(+). Catalyzes the transfer of acetyl from acetyl-CoA to desacetylmycothiol (Cys-GlcN-Ins) to form mycothiol. This Streptomyces avermitilis (strain ATCC 31267 / DSM 46492 / JCM 5070 / NBRC 14893 / NCIMB 12804 / NRRL 8165 / MA-4680) protein is Mycothiol acetyltransferase.